The sequence spans 478 residues: MKRVRFAPSPTGYLHLGNARTALFNYLFSRHENATFILRIEDTDLERSKKEYEEMLMEDLKWMGIEWDEGPDAGGPHGPYRQSERLEIYMKYVDKLLKSGDAYYCYCTEEELEQEREKAIAEGRPYRYSGKCRNLTPEERAFYEGKSIKPVIRFKVPDKTVVFEDIIRGHVEIDTKEFGDFVIVRQDGMPVYNFVVVIDDALMGITHVIRGEDHLSNTPKQIVIYEALGFAIPQFAHLPIILGEDRTKLSKRHGAVSVRALKDDGFISEAVFNYLSLLGWHPKEEKEILSKEEIIKQFRIEDVNKSPAIFDRTKLRWMNGVYIREILDLDDLTKRAIPFFEGFGYKADYEFYKKVMSAIRDSIETLMEIKERAKVFFVDEFPYTEEIVNEVKSDENVYKVVEIFYNKIKNLSAITKEDFKNITKEIQKEYGYKGKALFHPIRIALTGEPSGVGLDLLVEVIGIERVKFRLERFLEYFG.

A 'HIGH' region motif is present at residues 8–18 (PSPTGYLHLGN). The 'KMSKS' region motif lies at 248 to 252 (KLSKR). Lys251 lines the ATP pocket.

The protein belongs to the class-I aminoacyl-tRNA synthetase family. Glutamate--tRNA ligase type 1 subfamily. In terms of assembly, monomer.

The protein localises to the cytoplasm. It carries out the reaction tRNA(Glu) + L-glutamate + ATP = L-glutamyl-tRNA(Glu) + AMP + diphosphate. Catalyzes the attachment of glutamate to tRNA(Glu) in a two-step reaction: glutamate is first activated by ATP to form Glu-AMP and then transferred to the acceptor end of tRNA(Glu). The polypeptide is Glutamate--tRNA ligase (Sulfurihydrogenibium sp. (strain YO3AOP1)).